A 146-amino-acid chain; its full sequence is Large ribosomal subunit protein uL15 (146 aa).

A compositionally biased stretch (basic and acidic residues) spans 1-13; the sequence is MKLHELKPAEGSR. The disordered stretch occupies residues 1-51; that stretch reads MKLHELKPAEGSRKVRNRVGRGIGSGNGKTAGKGHKGQNARSGGGVRLGFE. Gly residues-rich tracts occupy residues 21–31 and 42–51; these read RGIGSGNGKTA and SGGGVRLGFE.

Belongs to the universal ribosomal protein uL15 family. As to quaternary structure, part of the 50S ribosomal subunit.

Functionally, binds to the 23S rRNA. This chain is Large ribosomal subunit protein uL15, found in Bacillus cereus (strain G9842).